Reading from the N-terminus, the 248-residue chain is 4-hydroxy-tetrahydrodipicolinate reductase (248 aa).

Residues 74-76 (GTT) and 99-102 (SANF) contribute to the NAD(+) site. Residue histidine 134 is the Proton donor/acceptor of the active site. Residue histidine 135 participates in (S)-2,3,4,5-tetrahydrodipicolinate binding. The active-site Proton donor is the lysine 138. 144-145 (GT) serves as a coordination point for (S)-2,3,4,5-tetrahydrodipicolinate.

Belongs to the DapB family.

It localises to the cytoplasm. The enzyme catalyses (S)-2,3,4,5-tetrahydrodipicolinate + NAD(+) + H2O = (2S,4S)-4-hydroxy-2,3,4,5-tetrahydrodipicolinate + NADH + H(+). It carries out the reaction (S)-2,3,4,5-tetrahydrodipicolinate + NADP(+) + H2O = (2S,4S)-4-hydroxy-2,3,4,5-tetrahydrodipicolinate + NADPH + H(+). The protein operates within amino-acid biosynthesis; L-lysine biosynthesis via DAP pathway; (S)-tetrahydrodipicolinate from L-aspartate: step 4/4. In terms of biological role, catalyzes the conversion of 4-hydroxy-tetrahydrodipicolinate (HTPA) to tetrahydrodipicolinate. This Chlorobium phaeobacteroides (strain BS1) protein is 4-hydroxy-tetrahydrodipicolinate reductase.